The following is a 411-amino-acid chain: Fructose-1,6-bisphosphatase, chloroplastic (411 aa).

The transit peptide at 1-53 (MAATAGATPSSHLLLSSSRHVAASPQPRILFPSLSGKRVAVGKNHHATGVRCM) directs the protein to the chloroplast. Mg(2+) contacts are provided by glutamate 133, glutamate 162, aspartate 183, leucine 185, and aspartate 186. 186 to 189 (DGSS) is a substrate binding site. Residues cysteine 227 and cysteine 232 are joined by a disulfide bond. Substrate-binding residues include asparagine 291, tyrosine 323, tyrosine 341, tyrosine 343, and lysine 353. Glutamate 359 is a binding site for Mg(2+).

It belongs to the FBPase class 1 family. As to quaternary structure, homotetramer. It depends on Mg(2+) as a cofactor.

Its subcellular location is the plastid. The protein resides in the chloroplast stroma. It carries out the reaction beta-D-fructose 1,6-bisphosphate + H2O = beta-D-fructose 6-phosphate + phosphate. It functions in the pathway carbohydrate biosynthesis; Calvin cycle. This chain is Fructose-1,6-bisphosphatase, chloroplastic (FBP), found in Brassica napus (Rape).